A 240-amino-acid chain; its full sequence is MAYKREKGLLYVVATPIGNMGDITLRAIDVLKEVDLVLCESAKETKSLFHKLGISTPVLALYKDHSETPFANVLEQLKQGKSMALVSDAGTPGVSDPGSQMVRTARENGISIVPVPGASALTALLSVSGFQVNPTYFLGFLSEKPSKKRRELERAREIEGLIVFYESVHKLPRLYPILEELFPETEVLMGRELTKAFEEVVYYANPRELANNPPNAKGEFVFLLNHRKKSLKGNSDSTDM.

It belongs to the methyltransferase superfamily. RsmI family.

The protein localises to the cytoplasm. It carries out the reaction cytidine(1402) in 16S rRNA + S-adenosyl-L-methionine = 2'-O-methylcytidine(1402) in 16S rRNA + S-adenosyl-L-homocysteine + H(+). Its function is as follows. Catalyzes the 2'-O-methylation of the ribose of cytidine 1402 (C1402) in 16S rRNA. The polypeptide is Ribosomal RNA small subunit methyltransferase I (Leptospira biflexa serovar Patoc (strain Patoc 1 / ATCC 23582 / Paris)).